Consider the following 202-residue polypeptide: Lipid A acyltransferase PagP (202 aa).

A signal peptide spans 1 to 25 (MNYKDIINACILSGVFLLHSPSALA). Residues His74, Asp117, and Ser118 contribute to the active site.

Belongs to the lipid A palmitoyltransferase family. In terms of assembly, homodimer.

Its subcellular location is the cell outer membrane. The catalysed reaction is a lipid A + a 1,2-diacyl-sn-glycero-3-phosphocholine = a hepta-acyl lipid A + a 2-acyl-sn-glycero-3-phosphocholine. It catalyses the reaction a lipid IVA + a 1,2-diacyl-sn-glycero-3-phosphocholine = a lipid IVB + a 2-acyl-sn-glycero-3-phosphocholine. It carries out the reaction a lipid IIA + a 1,2-diacyl-sn-glycero-3-phosphocholine = a lipid IIB + a 2-acyl-sn-glycero-3-phosphocholine. Its function is as follows. Transfers a fatty acid residue from the sn-1 position of a phospholipid to the N-linked hydroxyfatty acid chain on the proximal unit of lipid A or its precursors. The protein is Lipid A acyltransferase PagP of Yersinia pseudotuberculosis serotype IB (strain PB1/+).